The sequence spans 381 residues: 3-isopropylmalate dehydrogenase (381 aa).

Substrate contacts are provided by Arg104, Arg114, Arg142, and Asp232. Residues Asp232, Asp256, and Asp260 each contribute to the Mg(2+) site. 290–302 serves as a coordination point for NAD(+); the sequence is GSAPDIAGQDKAN.

It belongs to the isocitrate and isopropylmalate dehydrogenases family. LeuB type 1 subfamily. As to quaternary structure, homodimer. Mg(2+) serves as cofactor. Mn(2+) is required as a cofactor.

It is found in the cytoplasm. The catalysed reaction is (2R,3S)-3-isopropylmalate + NAD(+) = 4-methyl-2-oxopentanoate + CO2 + NADH. Its pathway is amino-acid biosynthesis; L-leucine biosynthesis; L-leucine from 3-methyl-2-oxobutanoate: step 3/4. Catalyzes the oxidation of 3-carboxy-2-hydroxy-4-methylpentanoate (3-isopropylmalate) to 3-carboxy-4-methyl-2-oxopentanoate. The product decarboxylates to 4-methyl-2 oxopentanoate. The protein is 3-isopropylmalate dehydrogenase of Synechococcus sp. (strain JA-3-3Ab) (Cyanobacteria bacterium Yellowstone A-Prime).